The sequence spans 479 residues: Sulfate adenylyltransferase subunit 1 (479 aa).

The 215-residue stretch at 25–239 (KSLLRFLTCG…EVLETVDIQR (215 aa)) folds into the tr-type G domain. The tract at residues 34-41 (GSVDDGKS) is G1. Residue 34-41 (GSVDDGKS) coordinates GTP. The G2 stretch occupies residues 92–96 (GITID). The segment at 113-116 (DTPG) is G3. Residues 113 to 117 (DTPGH) and 168 to 171 (NKMD) contribute to the GTP site. Positions 168 to 171 (NKMD) are G4. A G5 region spans residues 206 to 208 (SAL).

This sequence belongs to the TRAFAC class translation factor GTPase superfamily. Classic translation factor GTPase family. CysN/NodQ subfamily. As to quaternary structure, heterodimer composed of CysD, the smaller subunit, and CysN.

The enzyme catalyses sulfate + ATP + H(+) = adenosine 5'-phosphosulfate + diphosphate. The protein operates within sulfur metabolism; hydrogen sulfide biosynthesis; sulfite from sulfate: step 1/3. With CysD forms the ATP sulfurylase (ATPS) that catalyzes the adenylation of sulfate producing adenosine 5'-phosphosulfate (APS) and diphosphate, the first enzymatic step in sulfur assimilation pathway. APS synthesis involves the formation of a high-energy phosphoric-sulfuric acid anhydride bond driven by GTP hydrolysis by CysN coupled to ATP hydrolysis by CysD. The chain is Sulfate adenylyltransferase subunit 1 from Salmonella newport (strain SL254).